Reading from the N-terminus, the 504-residue chain is Histidine--tRNA ligase (504 aa).

The protein belongs to the class-II aminoacyl-tRNA synthetase family. In terms of assembly, homodimer.

The protein localises to the cytoplasm. It catalyses the reaction tRNA(His) + L-histidine + ATP = L-histidyl-tRNA(His) + AMP + diphosphate + H(+). The chain is Histidine--tRNA ligase from Rhizobium rhizogenes (strain K84 / ATCC BAA-868) (Agrobacterium radiobacter).